The following is a 374-amino-acid chain: Chaperone protein DnaJ (374 aa).

A J domain is found at 5-69 (DYYEVLGVSK…DKKAKYDQFG (65 aa)). A CR-type zinc finger spans residues 141–223 (GVNKKTILNL…CHGKGVESKR (83 aa)). Zn(2+) contacts are provided by Cys-154, Cys-157, Cys-171, Cys-174, Cys-197, Cys-200, Cys-211, and Cys-214. 4 CXXCXGXG motif repeats span residues 154 to 161 (CTKCDGVG), 171 to 178 (CTKCNGAG), 197 to 204 (CDKCNGVG), and 211 to 218 (CKNCHGKG).

The protein belongs to the DnaJ family. As to quaternary structure, homodimer. It depends on Zn(2+) as a cofactor.

It localises to the cytoplasm. Its function is as follows. Participates actively in the response to hyperosmotic and heat shock by preventing the aggregation of stress-denatured proteins and by disaggregating proteins, also in an autonomous, DnaK-independent fashion. Unfolded proteins bind initially to DnaJ; upon interaction with the DnaJ-bound protein, DnaK hydrolyzes its bound ATP, resulting in the formation of a stable complex. GrpE releases ADP from DnaK; ATP binding to DnaK triggers the release of the substrate protein, thus completing the reaction cycle. Several rounds of ATP-dependent interactions between DnaJ, DnaK and GrpE are required for fully efficient folding. Also involved, together with DnaK and GrpE, in the DNA replication of plasmids through activation of initiation proteins. The polypeptide is Chaperone protein DnaJ (Mesoplasma florum (strain ATCC 33453 / NBRC 100688 / NCTC 11704 / L1) (Acholeplasma florum)).